We begin with the raw amino-acid sequence, 319 residues long: MPRTIWSGAISFGLVTVPIHVVSATEDHSVRFHQYHLEDMGRVRVRKYCELEDREVTQDEIGKGYELSKDTVIPVLDEELRELPLPTAKAIEIEAFVPLASIDPMGIGEGYYLQPDGQVAAKPYKLLRQALERSSKVAVAKYAWSGRERLGMLRVREEAIVLHAMRWPDEIRDPSELAPQGIELSEDEITEAEQLIDRLTRDDLEGEEFQDHYTEALHEVIEAKQEGHAPPEARETEEEPGKVLDLMAALRQSVAKAKASRGESGEADVHELPRKKTAARKTAKQQPAKKTSAKRTAAKEPTKKTAAKKTTPKKPRRSA.

In terms of domain architecture, Ku spans 10–188 (ISFGLVTVPI…PQGIELSEDE (179 aa)). Residues 252-319 (QSVAKAKASR…TTPKKPRRSA (68 aa)) form a disordered region. Residues 260 to 274 (SRGESGEADVHELPR) show a composition bias toward basic and acidic residues. The span at 305 to 319 (TAAKKTTPKKPRRSA) shows a compositional bias: basic residues.

Belongs to the prokaryotic Ku family. In terms of assembly, homodimer. Interacts with LigD.

In terms of biological role, with LigD forms a non-homologous end joining (NHEJ) DNA repair enzyme, which repairs dsDNA breaks with reduced fidelity. Binds linear dsDNA with 5'- and 3'- overhangs but not closed circular dsDNA nor ssDNA. Recruits and stimulates the ligase activity of LigD. This Streptomyces avermitilis (strain ATCC 31267 / DSM 46492 / JCM 5070 / NBRC 14893 / NCIMB 12804 / NRRL 8165 / MA-4680) protein is Non-homologous end joining protein Ku.